A 196-amino-acid chain; its full sequence is Putative NADH dehydrogenase/NAD(P)H nitroreductase Pnuc_0932 (196 aa).

This sequence belongs to the nitroreductase family. HadB/RutE subfamily. FMN serves as cofactor.

This chain is Putative NADH dehydrogenase/NAD(P)H nitroreductase Pnuc_0932, found in Polynucleobacter asymbioticus (strain DSM 18221 / CIP 109841 / QLW-P1DMWA-1) (Polynucleobacter necessarius subsp. asymbioticus).